We begin with the raw amino-acid sequence, 403 residues long: JmjC domain-containing histone demethylation protein 1 (403 aa).

The 188-residue stretch at 141–328 folds into the JmjC domain; the sequence is WSLREWCNYF…QQLKIVDVEK (188 aa). Threonine 221 provides a ligand contact to substrate. Residues histidine 224 and aspartate 226 each contribute to the Fe cation site. Lysine 241 contacts substrate. Histidine 296 lines the Fe cation pocket.

This sequence belongs to the JHDM1 histone demethylase family. Requires Fe(2+) as cofactor.

It is found in the nucleus. The enzyme catalyses N(6),N(6)-dimethyl-L-lysyl(36)-[histone H3] + 2 2-oxoglutarate + 2 O2 = L-lysyl(36)-[histone H3] + 2 formaldehyde + 2 succinate + 2 CO2. Histone demethylase that specifically demethylates 'Lys-36' of histone H3, thereby playing a central role in histone code. This Candida glabrata (strain ATCC 2001 / BCRC 20586 / JCM 3761 / NBRC 0622 / NRRL Y-65 / CBS 138) (Yeast) protein is JmjC domain-containing histone demethylation protein 1 (JHD1).